The following is a 323-amino-acid chain: Acetyl-coenzyme A carboxylase carboxyl transferase subunit alpha (323 aa).

In terms of domain architecture, CoA carboxyltransferase C-terminal spans Glu-35–Glu-296.

The protein belongs to the AccA family. As to quaternary structure, acetyl-CoA carboxylase is a heterohexamer composed of biotin carboxyl carrier protein (AccB), biotin carboxylase (AccC) and two subunits each of ACCase subunit alpha (AccA) and ACCase subunit beta (AccD).

It localises to the cytoplasm. It carries out the reaction N(6)-carboxybiotinyl-L-lysyl-[protein] + acetyl-CoA = N(6)-biotinyl-L-lysyl-[protein] + malonyl-CoA. It functions in the pathway lipid metabolism; malonyl-CoA biosynthesis; malonyl-CoA from acetyl-CoA: step 1/1. In terms of biological role, component of the acetyl coenzyme A carboxylase (ACC) complex. First, biotin carboxylase catalyzes the carboxylation of biotin on its carrier protein (BCCP) and then the CO(2) group is transferred by the carboxyltransferase to acetyl-CoA to form malonyl-CoA. This Aquifex aeolicus (strain VF5) protein is Acetyl-coenzyme A carboxylase carboxyl transferase subunit alpha.